We begin with the raw amino-acid sequence, 372 residues long: uncharacterized protein (372 aa).

Residues 1–33 (MVRRALRLAAGTASLAAGTWLLRALHGTPAALG) form the signal peptide.

To K.pneumoniae RomA.

This is an uncharacterized protein from Mycobacterium bovis (strain ATCC BAA-935 / AF2122/97).